The primary structure comprises 1086 residues: Lon protease homolog, mitochondrial (1086 aa).

Residues 1-55 (MLRTSCTSSLRRVVGKYVVSPLVASQIRFATSSVRSQPYLLNSELTELPAQFKRY) constitute a mitochondrion transit peptide. The interval 61-176 (TEKPEGDVPE…EPNEIVTNAG (116 aa)) is disordered. The span at 69-83 (PESGPEPSGESGISE) shows a compositional bias: low complexity. Residues 85-120 (SNVENDKHDGNDEIKPEAEKNEKDEIEKPEIDKDAI) show a composition bias toward basic and acidic residues. The segment covering 124 to 163 (DGVSESSVENVSGSSSAAGGASAPPSGNSNNNNNNNNNNN) has biased composition (low complexity). The Lon N-terminal domain maps to 183 to 406 (LLAIPMKDRP…KALELLKVEL (224 aa)). Residue 558-565 (GPPGTGKT) participates in ATP binding. Basic and acidic residues-rich tracts occupy residues 767-782 (EAREGESKSKSEEAKS) and 815-827 (KVDEAKPVESEEL). Disordered stretches follow at residues 767-788 (EAREGESKSKSEEAKSEAITGS) and 800-835 (KAQSIEEPSVESASQKVDEAKPVESEELKSDEEEEE). One can recognise a Lon proteolytic domain in the interval 871–1059 (IPPPGVATGL…QDVFDEIFPN (189 aa)). Active-site residues include S965 and K1008.

Belongs to the peptidase S16 family. Homohexamer or homoheptamer. Organized in a ring with a central cavity.

Its subcellular location is the mitochondrion matrix. The enzyme catalyses Hydrolysis of proteins in presence of ATP.. Its function is as follows. ATP-dependent serine protease that mediates the selective degradation of misfolded, unassembled or oxidatively damaged polypeptides as well as certain short-lived regulatory proteins in the mitochondrial matrix. May also have a chaperone function in the assembly of inner membrane protein complexes. Participates in the regulation of mitochondrial gene expression and in the maintenance of the integrity of the mitochondrial genome. Binds to mitochondrial DNA in a site-specific manner. The chain is Lon protease homolog, mitochondrial from Scheffersomyces stipitis (strain ATCC 58785 / CBS 6054 / NBRC 10063 / NRRL Y-11545) (Yeast).